Consider the following 708-residue polypeptide: Homeobox-leucine zipper protein HDG10 (708 aa).

The disordered stretch occupies residues 1–24 (MDSSHNDSSSDEEGIDSNNRRHHS). Residues 16-75 (DSNNRRHHSNHQVQRLEAFFHECPHPDDSQRRQLGNELNLKHKQIKFWFQNRRTQARIHN) constitute a DNA-binding region (homeobox). A coiled-coil region spans residues 119–141 (LCNLQKLRTKNVILKTEYERLSS). Residues 162 to 188 (GPSTYGSTSNNRPASYGSSSNHLPQQS) form a disordered region. The segment covering 165 to 188 (TYGSTSNNRPASYGSSSNHLPQQS) has biased composition (polar residues). In terms of domain architecture, START spans 218–456 (SQLEKNRMFE…LQRMCERLSL (239 aa)).

The protein belongs to the HD-ZIP homeobox family. Class IV subfamily. Interacts with ANT, BBM and AIL1. In terms of tissue distribution, expressed in exclusively in anthers with highest levels in the tapetum and pollen grains.

Its subcellular location is the nucleus. Functionally, probable transcription factor. This is Homeobox-leucine zipper protein HDG10 from Arabidopsis thaliana (Mouse-ear cress).